The primary structure comprises 744 residues: Spalt-like protein sem-4 (744 aa).

The segment at 6–32 (AEMAAVSSRRKQSKPRRMSGEGDAMMS) is disordered. Over residues 13 to 22 (SRRKQSKPRR) the composition is skewed to basic residues. C2H2-type zinc fingers lie at residues 99–124 (SSCPIQSCSQSFSSPAALTWHVLDAH), 305–327 (NQCILCRRVLSCKSALQMHYRTH), 333–355 (FKCKICQRAFTTKGNLKTHMGVH), and 411–433 (QQCPICQQRFLNAGELAVHITEH). A compositionally biased stretch (polar residues) spans 487 to 497 (KNDSSPNTDTS). Disordered stretches follow at residues 487 to 530 (KNDS…RQDI) and 542 to 562 (KLEEPPILEQQVSTTPNPKNE). Over residues 499 to 509 (VEEKITRDDPP) the composition is skewed to basic and acidic residues. Residues 513-525 (SLSPSNSSDSSSS) are compositionally biased toward low complexity. Over residues 551 to 561 (QQVSTTPNPKN) the composition is skewed to polar residues. 3 consecutive C2H2-type zinc fingers follow at residues 589-611 (HQCGVCFKHFSSSSALQIHMRTH), 617-639 (FKCDMCGRAFTTRGNLKVHMGTH), and 701-723 (TVCSVCQKVCQSPNELEQHLKEH). Residues 725–744 (NNGSSAAPTPLASAATPPPS) are disordered. Over residues 728 to 744 (SSAAPTPLASAATPPPS) the composition is skewed to low complexity.

This sequence belongs to the sal C2H2-type zinc-finger protein family.

It is found in the nucleus. Its function is as follows. Transcription factor, involved in positive and negative modulation of transcription. Binds to multiple DNA sequence motifs in the regulatory elements of target genes, including homeobox selector egl-5 and LIM homeobox mec-3. Involved in cell-fate regulation in multiple lineages, including neuronal, mesodermal and vulval. Required to regulate the fate of PLM touch receptor neurons, acting via negative modulation of transcription of egl-5 and mec-3. May modulate gene expression by interacting with different transcription factors during neuronal and mesodermal cell development. Promotes the proliferative sex myoblast (SM) fate, in a cell autonomous manner, acting via the SoxC transcription factor sem-2. Involved in vulval cell-fate determination, acting by regulating expression of homeobox protein lin-39, and may link lin-39 to incoming signaling pathways. Plays a role in detoxification of reactive oxygen species (ROS), by regulating expression of transcription factor skn-1 and the phase II detoxification genes. This Caenorhabditis elegans protein is Spalt-like protein sem-4.